A 446-amino-acid chain; its full sequence is Probable glycine dehydrogenase (decarboxylating) subunit 1 (446 aa).

Belongs to the GcvP family. N-terminal subunit subfamily. The glycine cleavage system is composed of four proteins: P, T, L and H. In this organism, the P 'protein' is a heterodimer of two subunits.

It carries out the reaction N(6)-[(R)-lipoyl]-L-lysyl-[glycine-cleavage complex H protein] + glycine + H(+) = N(6)-[(R)-S(8)-aminomethyldihydrolipoyl]-L-lysyl-[glycine-cleavage complex H protein] + CO2. In terms of biological role, the glycine cleavage system catalyzes the degradation of glycine. The P protein binds the alpha-amino group of glycine through its pyridoxal phosphate cofactor; CO(2) is released and the remaining methylamine moiety is then transferred to the lipoamide cofactor of the H protein. The polypeptide is Probable glycine dehydrogenase (decarboxylating) subunit 1 (Thermococcus onnurineus (strain NA1)).